The following is a 381-amino-acid chain: Pentatricopeptide repeat-containing protein 2, mitochondrial (381 aa).

The PPR repeat unit spans residues 159–193 (TSFNILMDMLFTKGKYERALQVLIEMKNQDVRFSK). Serine 375 carries the phosphoserine modification.

It belongs to the PTCD2 family. In terms of tissue distribution, high expression in heart and liver and low expression in kidney, brain and testis.

It is found in the mitochondrion. Involved in mitochondrial RNA maturation and mitochondrial respiratory chain function. This is Pentatricopeptide repeat-containing protein 2, mitochondrial (Ptcd2) from Mus musculus (Mouse).